A 709-amino-acid chain; its full sequence is Phosphoribosylformylglycinamidine synthase subunit PurL (709 aa).

His36 is an active-site residue. 2 residues coordinate ATP: Tyr39 and Lys80. A Mg(2+)-binding site is contributed by Glu82. Substrate is bound by residues 83 to 86 (SHNH) and Arg105. The Proton acceptor role is filled by His84. Asp106 contacts Mg(2+). Position 226 (Gln226) interacts with substrate. Residue Asp252 coordinates Mg(2+). 294–296 (ETQ) serves as a coordination point for substrate. Residues Asp470 and Gly507 each coordinate ATP. Ser510 is a binding site for substrate.

The protein belongs to the FGAMS family. As to quaternary structure, monomer. Part of the FGAM synthase complex composed of 1 PurL, 1 PurQ and 2 PurS subunits.

The protein localises to the cytoplasm. The catalysed reaction is N(2)-formyl-N(1)-(5-phospho-beta-D-ribosyl)glycinamide + L-glutamine + ATP + H2O = 2-formamido-N(1)-(5-O-phospho-beta-D-ribosyl)acetamidine + L-glutamate + ADP + phosphate + H(+). It participates in purine metabolism; IMP biosynthesis via de novo pathway; 5-amino-1-(5-phospho-D-ribosyl)imidazole from N(2)-formyl-N(1)-(5-phospho-D-ribosyl)glycinamide: step 1/2. Its function is as follows. Part of the phosphoribosylformylglycinamidine synthase complex involved in the purines biosynthetic pathway. Catalyzes the ATP-dependent conversion of formylglycinamide ribonucleotide (FGAR) and glutamine to yield formylglycinamidine ribonucleotide (FGAM) and glutamate. The FGAM synthase complex is composed of three subunits. PurQ produces an ammonia molecule by converting glutamine to glutamate. PurL transfers the ammonia molecule to FGAR to form FGAM in an ATP-dependent manner. PurS interacts with PurQ and PurL and is thought to assist in the transfer of the ammonia molecule from PurQ to PurL. The protein is Phosphoribosylformylglycinamidine synthase subunit PurL of Saccharolobus solfataricus (strain ATCC 35092 / DSM 1617 / JCM 11322 / P2) (Sulfolobus solfataricus).